A 492-amino-acid polypeptide reads, in one-letter code: 2,3-bisphosphoglycerate-independent phosphoglycerate mutase (492 aa).

Residues aspartate 11 and serine 61 each contribute to the Mn(2+) site. The active-site Phosphoserine intermediate is the serine 61. Residues histidine 118, arginine 147–aspartate 148, arginine 178, arginine 184, arginine 248–arginine 251, and lysine 320 contribute to the substrate site. The Mn(2+) site is built by aspartate 386, histidine 390, aspartate 427, histidine 428, and histidine 445.

This sequence belongs to the BPG-independent phosphoglycerate mutase family. Monomer. Mn(2+) is required as a cofactor.

It carries out the reaction (2R)-2-phosphoglycerate = (2R)-3-phosphoglycerate. Its pathway is carbohydrate degradation; glycolysis; pyruvate from D-glyceraldehyde 3-phosphate: step 3/5. Functionally, catalyzes the interconversion of 2-phosphoglycerate and 3-phosphoglycerate. The protein is 2,3-bisphosphoglycerate-independent phosphoglycerate mutase of Campylobacter jejuni subsp. jejuni serotype O:2 (strain ATCC 700819 / NCTC 11168).